The following is a 347-amino-acid chain: High mobility group protein 20A (347 aa).

Composition is skewed to polar residues over residues 1–10 (MENLMTSSTL) and 40–49 (SGATSSTNNP). Disordered stretches follow at residues 1-113 (MENL…YVRF) and 179-211 (FSRK…TEVK). Positions 55-66 (LSQGQLLQSESS) are enriched in low complexity. Residues 72-82 (NEQRHEDEQRS) are compositionally biased toward basic and acidic residues. Positions 83–96 (KRGGWSKGRKRKKP) are enriched in basic residues. Positions 103-171 (PKSPLTGYVR…RYMKELEQYQ (69 aa)) form a DNA-binding region, HMG box. S105 carries the post-translational modification Phosphoserine. Over residues 182 to 211 (KTQDRQKGKSHRQDAARQATHDHEKETEVK) the composition is skewed to basic and acidic residues. Positions 229 to 273 (SKAREAELRQLRKSNMEFEERNAALQKHVESMRTAVEKLEVDVIQ) form a coiled coil.

Interacts with DTNB. As to expression, ubiquitous.

It is found in the nucleus. Functionally, plays a role in neuronal differentiation as chromatin-associated protein. Acts as inhibitor of HMG20B. Overcomes the repressive effects of the neuronal silencer REST and induces the activation of neuronal-specific genes. Involved in the recruitment of the histone methyltransferase KMT2A/MLL1 and consequent increased methylation of histone H3 lysine 4. The polypeptide is High mobility group protein 20A (HMG20A) (Homo sapiens (Human)).